Here is a 219-residue protein sequence, read N- to C-terminus: Ribonuclease HII (219 aa).

An RNase H type-2 domain is found at 30–219 (RVIAGIDEAG…VREHVTCPSS (190 aa)). Asp-36, Glu-37, and Asp-128 together coordinate a divalent metal cation.

It belongs to the RNase HII family. The cofactor is Mn(2+). It depends on Mg(2+) as a cofactor.

The protein localises to the cytoplasm. It carries out the reaction Endonucleolytic cleavage to 5'-phosphomonoester.. Functionally, endonuclease that specifically degrades the RNA of RNA-DNA hybrids. In Pelobacter propionicus (strain DSM 2379 / NBRC 103807 / OttBd1), this protein is Ribonuclease HII.